Here is a 185-residue protein sequence, read N- to C-terminus: MINDIKKTAESKMQKTIEAFKHTLAKVRTGRAHAGLLDHITVDYYGSDTPINQVANVTLIDARTIGVQVWEKNMAAKVEKAIRDSDLGLNPMSMGEVIRVPMPALTEERRRDLTKVVKGEAEDARVAVRNVRRDANNDLKTLLKDKDITEDEERRAQDDIQKLTDKYVAEVDKLFAEKEKELMAI.

It belongs to the RRF family.

The protein localises to the cytoplasm. Its function is as follows. Responsible for the release of ribosomes from messenger RNA at the termination of protein biosynthesis. May increase the efficiency of translation by recycling ribosomes from one round of translation to another. The polypeptide is Ribosome-recycling factor (Laribacter hongkongensis (strain HLHK9)).